Consider the following 467-residue polypeptide: ATP synthase subunit beta (467 aa).

150-157 (GGAGVGKT) is an ATP binding site.

The protein belongs to the ATPase alpha/beta chains family. In terms of assembly, F-type ATPases have 2 components, CF(1) - the catalytic core - and CF(0) - the membrane proton channel. CF(1) has five subunits: alpha(3), beta(3), gamma(1), delta(1), epsilon(1). CF(0) has three main subunits: a(1), b(2) and c(9-12). The alpha and beta chains form an alternating ring which encloses part of the gamma chain. CF(1) is attached to CF(0) by a central stalk formed by the gamma and epsilon chains, while a peripheral stalk is formed by the delta and b chains.

It localises to the cell inner membrane. It catalyses the reaction ATP + H2O + 4 H(+)(in) = ADP + phosphate + 5 H(+)(out). Functionally, produces ATP from ADP in the presence of a proton gradient across the membrane. The catalytic sites are hosted primarily by the beta subunits. This Aliivibrio fischeri (strain ATCC 700601 / ES114) (Vibrio fischeri) protein is ATP synthase subunit beta.